Reading from the N-terminus, the 219-residue chain is uncharacterized protein (219 aa).

This is an uncharacterized protein from Treponema pallidum (strain Nichols).